The chain runs to 208 residues: Probable GTP-binding protein EngB (208 aa).

Positions 18 to 187 constitute an EngB-type G domain; that stretch reads KQFEICVIGR…FALMKKVVIQ (170 aa). Residues 26 to 33, 52 to 56, 69 to 72, 135 to 138, and 166 to 168 contribute to the GTP site; these read GRSNVGKS, GRTQL, DLPG, NKLD, and VSA. Residues Ser33 and Thr54 each coordinate Mg(2+).

It belongs to the TRAFAC class TrmE-Era-EngA-EngB-Septin-like GTPase superfamily. EngB GTPase family. Mg(2+) serves as cofactor.

Necessary for normal cell division and for the maintenance of normal septation. This chain is Probable GTP-binding protein EngB, found in Ureaplasma parvum serovar 3 (strain ATCC 27815 / 27 / NCTC 11736).